The primary structure comprises 296 residues: Transmembrane O-methyltransferase (296 aa).

The helical transmembrane segment at 36–56 (VGTMSPAIALAFLPLVVTLLV) threads the bilayer. Residues Glu-142, 144-145 (GT), Ser-150, Glu-168, and Ser-198 each bind S-adenosyl-L-methionine.

Belongs to the class I-like SAM-binding methyltransferase superfamily. Cation-dependent O-methyltransferase family. Interacts with LHFPL5, PCDH15, TMC1, TMC2 and TMIE. Interacts directly with TMC1. The interaction of TOMT with TMC1 and TMC2 is required for the transportation of TMC1/2 into the stereocilia of hair cells.

The protein localises to the membrane. The protein resides in the cytoplasm. Its subcellular location is the endoplasmic reticulum. The catalysed reaction is a catechol + S-adenosyl-L-methionine = a guaiacol + S-adenosyl-L-homocysteine + H(+). Catalyzes the O-methylation, and thereby the inactivation, of catecholamine neurotransmitters and catechol hormones. Required for auditory function. Component of the cochlear hair cell's mechanotransduction (MET) machinery. Involved in the assembly of the asymmetric tip-link MET complex. Required for transportation of TMC1 and TMC2 proteins into the mechanically sensitive stereocilia of the hair cells. The function in MET is independent of the enzymatic activity. The chain is Transmembrane O-methyltransferase from Macaca mulatta (Rhesus macaque).